The sequence spans 317 residues: Putative HTH-type transcriptional regulatory protein Mlab_0160 (317 aa).

An HTH cro/C1-type domain is found at 132 to 189 (LRTLREEQAMSLGDLAHALGVSRRTISKYEGGMGTTLEMAMRLEEFFNDDIVMPIDLL). A DNA-binding region (H-T-H motif) is located at residues 143–162 (LGDLAHALGVSRRTISKYEG). The tract at residues 199–219 (VPASLASGHNPESDAQPKRPE) is disordered. A compositionally biased stretch (basic and acidic residues) spans 209–219 (PESDAQPKRPE).

This is Putative HTH-type transcriptional regulatory protein Mlab_0160 from Methanocorpusculum labreanum (strain ATCC 43576 / DSM 4855 / Z).